Reading from the N-terminus, the 125-residue chain is UPF0593 mitochondrial protein C806.05 (125 aa).

It belongs to the UPF0593 family.

It is found in the mitochondrion. This Schizosaccharomyces pombe (strain 972 / ATCC 24843) (Fission yeast) protein is UPF0593 mitochondrial protein C806.05.